A 643-amino-acid polypeptide reads, in one-letter code: Translation factor GUF1, mitochondrial (643 aa).

Residues Met1 to Leu18 constitute a mitochondrion transit peptide. One can recognise a tr-type G domain in the interval Glu43–Thr226. GTP contacts are provided by residues Ala52 to Ser59, Asp118 to His122, and Asn172 to Asp175.

It belongs to the TRAFAC class translation factor GTPase superfamily. Classic translation factor GTPase family. LepA subfamily.

It is found in the mitochondrion inner membrane. The catalysed reaction is GTP + H2O = GDP + phosphate + H(+). Promotes mitochondrial protein synthesis. May act as a fidelity factor of the translation reaction, by catalyzing a one-codon backward translocation of tRNAs on improperly translocated ribosomes. Binds to mitochondrial ribosomes in a GTP-dependent manner. This is Translation factor GUF1, mitochondrial from Zygosaccharomyces rouxii (strain ATCC 2623 / CBS 732 / NBRC 1130 / NCYC 568 / NRRL Y-229).